A 514-amino-acid polypeptide reads, in one-letter code: 2-isopropylmalate synthase (514 aa).

Positions 4 to 266 (INVFDTSLRD…KTGLKLSELK (263 aa)) constitute a Pyruvate carboxyltransferase domain. Residues Asp-13, His-201, His-203, and Asn-237 each coordinate Mn(2+). The tract at residues 390-514 (ELTALQVTYG…AKREMAKVES (125 aa)) is regulatory domain.

It belongs to the alpha-IPM synthase/homocitrate synthase family. LeuA type 1 subfamily. As to quaternary structure, homodimer. Mn(2+) is required as a cofactor.

It is found in the cytoplasm. It catalyses the reaction 3-methyl-2-oxobutanoate + acetyl-CoA + H2O = (2S)-2-isopropylmalate + CoA + H(+). The protein operates within amino-acid biosynthesis; L-leucine biosynthesis; L-leucine from 3-methyl-2-oxobutanoate: step 1/4. Its function is as follows. Catalyzes the condensation of the acetyl group of acetyl-CoA with 3-methyl-2-oxobutanoate (2-ketoisovalerate) to form 3-carboxy-3-hydroxy-4-methylpentanoate (2-isopropylmalate). This chain is 2-isopropylmalate synthase, found in Shouchella clausii (strain KSM-K16) (Alkalihalobacillus clausii).